The following is a 139-amino-acid chain: Nucleoside diphosphate kinase (139 aa).

Lysine 11, phenylalanine 59, arginine 87, threonine 93, arginine 104, and asparagine 114 together coordinate ATP. The active-site Pros-phosphohistidine intermediate is histidine 117.

The protein belongs to the NDK family. Homotetramer. It depends on Mg(2+) as a cofactor.

The protein resides in the cytoplasm. It carries out the reaction a 2'-deoxyribonucleoside 5'-diphosphate + ATP = a 2'-deoxyribonucleoside 5'-triphosphate + ADP. It catalyses the reaction a ribonucleoside 5'-diphosphate + ATP = a ribonucleoside 5'-triphosphate + ADP. Functionally, major role in the synthesis of nucleoside triphosphates other than ATP. The ATP gamma phosphate is transferred to the NDP beta phosphate via a ping-pong mechanism, using a phosphorylated active-site intermediate. In Flavobacterium johnsoniae (strain ATCC 17061 / DSM 2064 / JCM 8514 / BCRC 14874 / CCUG 350202 / NBRC 14942 / NCIMB 11054 / UW101) (Cytophaga johnsonae), this protein is Nucleoside diphosphate kinase.